The following is a 417-amino-acid chain: MLNNSRLCIIWLFGLISGFNLMITGNTLNYWLAKEDIALQTIGILSFITLPYSINFLLAPIFDAVQIKYLNKIFGHRLSWICLTSSALIFLIYIFSFLDPSTNLLLFAFTALIISFFSAAQDTILSALRTEIVPKESLGFTSGIYIFGYRVGMLLAGSGAIYLSIYLTFNEIYKIFAGLVFIYLILLIVGIKYCDLNENIHIQIIKNDIKNNQNKKNIINFIYNALKPIGSVYFIILILIFLVLYRLPDNLINVMINPFLLHLEYDAFEIASVGKFCGVVGAIIGGLVGGVIMKHKNILNSIFLFGIIHALGHILFIFLEINGKNSLLLFITIGIASITGGMTMTAYIAFISALCQGKFRATQYSFLSSMMGISRSIFPIISGYMVVNFGWQNFFLFTTIITIPSLLILLKIKTKLQ.

12 consecutive transmembrane segments (helical) span residues 7–27 (LCII…TGNT), 42–62 (IGIL…APIF), 78–98 (LSWI…FSFL), 104–124 (LLLF…QDTI), 143–163 (GIYI…AIYL), 171–191 (EIYK…IVGI), 225–245 (ALKP…LVLY), 273–293 (VGKF…GVIM), 301–321 (SIFL…FLEI), 328–348 (LLFI…TAYI), 366–386 (FLSS…GYMV), and 389–409 (FGWQ…LLIL).

This sequence belongs to the major facilitator superfamily.

The protein localises to the cell inner membrane. The chain is Putative transporter AmpG 1 (ampG1) from Rickettsia conorii (strain ATCC VR-613 / Malish 7).